The primary structure comprises 492 residues: Replication factor C large subunit (492 aa).

46 to 53 (GPPGSGKT) is an ATP binding site. Residues 445–492 (VIPKRPKISDNQISEILTKDNNPKDDVKKASKKPESTSKKQATLDKFF) form a disordered region. Over residues 461-482 (LTKDNNPKDDVKKASKKPESTS) the composition is skewed to basic and acidic residues.

Belongs to the activator 1 small subunits family. RfcL subfamily. As to quaternary structure, heteromultimer composed of small subunits (RfcS) and large subunits (RfcL).

Part of the RFC clamp loader complex which loads the PCNA sliding clamp onto DNA. This is Replication factor C large subunit from Methanococcus vannielii (strain ATCC 35089 / DSM 1224 / JCM 13029 / OCM 148 / SB).